Here is a 402-residue protein sequence, read N- to C-terminus: Caspase-1 (402 aa).

The CARD domain occupies 1-91; that stretch reads MADKVLRAKR…YLAEILELQS (91 aa). Residues 1-118 constitute a propeptide that is removed on maturation; it reads MADKVLRAKR…PFSSETKEKL (118 aa). Active-site residues include His-236 and Cys-284. A propeptide spanning residues 297–314 is cleaved from the precursor; sequence SVGNSEEGFLTDAIFEDD. At Ser-301 the chain carries Phosphoserine.

The protein belongs to the peptidase C14A family. Heterotetramer that consists of two anti-parallel arranged heterodimers, each one formed by a 20 kDa (Caspase-1 subunit p20) and a 10 kDa (Caspase-1 subunit p10) subunit. May be a component of the inflammasome, a protein complex which also includes PYCARD, CARD8 and NLRP2 and whose function would be the activation of pro-inflammatory caspases. Component of the AIM2 PANoptosome complex, a multiprotein complex that drives inflammatory cell death (PANoptosis). Both the p10 and p20 subunits interact with MEFV. Interacts with CARD17P/INCA and CARD18. Interacts with SERPINB1; this interaction regulates CASP1 activity. As to quaternary structure, heterotetramer that consists of two anti-parallel arranged heterodimers, each one formed by a 20 kDa (Caspase-1 subunit p20) and a 10 kDa (Caspase-1 subunit p10) subunit. The two subunits are derived from the precursor sequence by an autocatalytic mechanism. In terms of processing, ubiquitinated via 'Lys-11'-linked polyubiquitination. Deubiquitinated by USP8.

Its subcellular location is the cytoplasm. It localises to the cell membrane. The enzyme catalyses Strict requirement for an Asp residue at position P1 and has a preferred cleavage sequence of Tyr-Val-Ala-Asp-|-.. Functionally, thiol protease involved in a variety of inflammatory processes by proteolytically cleaving other proteins, such as the precursors of the inflammatory cytokines interleukin-1 beta (IL1B) and interleukin 18 (IL18) as well as the pyroptosis inducer Gasdermin-D (GSDMD), into active mature peptides. Plays a key role in cell immunity as an inflammatory response initiator: once activated through formation of an inflammasome complex, it initiates a pro-inflammatory response through the cleavage of the two inflammatory cytokines IL1B and IL18, releasing the mature cytokines which are involved in a variety of inflammatory processes. Cleaves a tetrapeptide after an Asp residue at position P1. Also initiates pyroptosis, a programmed lytic cell death pathway, through cleavage of GSDMD. In contrast to cleavage of interleukin IL1B, recognition and cleavage of GSDMD is not strictly dependent on the consensus cleavage site but depends on an exosite interface on CASP1 that recognizes and binds the Gasdermin-D, C-terminal (GSDMD-CT) part. Cleaves and activates CASP7 in response to bacterial infection, promoting plasma membrane repair. Upon inflammasome activation, during DNA virus infection but not RNA virus challenge, controls antiviral immunity through the cleavage of CGAS, rendering it inactive. In apoptotic cells, cleaves SPHK2 which is released from cells and remains enzymatically active extracellularly. This Rattus norvegicus (Rat) protein is Caspase-1 (Casp1).